We begin with the raw amino-acid sequence, 84 residues long: Large ribosomal subunit protein bL27 (84 aa).

A disordered region spans residues M1 to K24.

Belongs to the bacterial ribosomal protein bL27 family.

This is Large ribosomal subunit protein bL27 from Pelobacter propionicus (strain DSM 2379 / NBRC 103807 / OttBd1).